We begin with the raw amino-acid sequence, 385 residues long: Polyketide synthase 3 (385 aa).

C157 is an active-site residue.

It belongs to the thiolase-like superfamily. Chalcone/stilbene synthases family. As to expression, expressed in male and female flowers, and seedlings.

The protein localises to the cytoplasm. In terms of biological role, polyketide synthase responsible for the biosynthesis of secondary metabolites. This Cannabis sativa (Hemp) protein is Polyketide synthase 3 (PKSF3).